An 874-amino-acid chain; its full sequence is Alanine--tRNA ligase (874 aa).

Zn(2+) is bound by residues His-562, His-566, Cys-663, and His-667.

It belongs to the class-II aminoacyl-tRNA synthetase family. It depends on Zn(2+) as a cofactor.

It localises to the cytoplasm. It carries out the reaction tRNA(Ala) + L-alanine + ATP = L-alanyl-tRNA(Ala) + AMP + diphosphate. Its function is as follows. Catalyzes the attachment of alanine to tRNA(Ala) in a two-step reaction: alanine is first activated by ATP to form Ala-AMP and then transferred to the acceptor end of tRNA(Ala). Also edits incorrectly charged Ser-tRNA(Ala) and Gly-tRNA(Ala) via its editing domain. This is Alanine--tRNA ligase from Bordetella pertussis (strain Tohama I / ATCC BAA-589 / NCTC 13251).